Reading from the N-terminus, the 227-residue chain is NADH-quinone oxidoreductase subunit C (227 aa).

Belongs to the complex I 30 kDa subunit family. As to quaternary structure, NDH-1 is composed of 14 different subunits. Subunits NuoB, C, D, E, F, and G constitute the peripheral sector of the complex.

Its subcellular location is the cell inner membrane. It carries out the reaction a quinone + NADH + 5 H(+)(in) = a quinol + NAD(+) + 4 H(+)(out). NDH-1 shuttles electrons from NADH, via FMN and iron-sulfur (Fe-S) centers, to quinones in the respiratory chain. The immediate electron acceptor for the enzyme in this species is believed to be ubiquinone. Couples the redox reaction to proton translocation (for every two electrons transferred, four hydrogen ions are translocated across the cytoplasmic membrane), and thus conserves the redox energy in a proton gradient. This Coxiella burnetii (strain Dugway 5J108-111) protein is NADH-quinone oxidoreductase subunit C.